The sequence spans 413 residues: 3-oxoacyl-[acyl-carrier-protein] synthase 2 (413 aa).

Residues 3 to 412 (KRRVVVTGLG…GTNGSLIFKK (410 aa)) form the Ketosynthase family 3 (KS3) domain. Residues Cys164, His304, and His341 each act as for beta-ketoacyl synthase activity in the active site.

It belongs to the thiolase-like superfamily. Beta-ketoacyl-ACP synthases family. As to quaternary structure, homodimer.

The catalysed reaction is a fatty acyl-[ACP] + malonyl-[ACP] + H(+) = a 3-oxoacyl-[ACP] + holo-[ACP] + CO2. It carries out the reaction (9Z)-hexadecenoyl-[ACP] + malonyl-[ACP] + H(+) = 3-oxo-(11Z)-octadecenoyl-[ACP] + holo-[ACP] + CO2. It functions in the pathway lipid metabolism; fatty acid biosynthesis. Functionally, involved in the type II fatty acid elongation cycle. Catalyzes the elongation of a wide range of acyl-ACP by the addition of two carbons from malonyl-ACP to an acyl acceptor. Can efficiently catalyze the conversion of palmitoleoyl-ACP (cis-hexadec-9-enoyl-ACP) to cis-vaccenoyl-ACP (cis-octadec-11-enoyl-ACP), an essential step in the thermal regulation of fatty acid composition. The polypeptide is 3-oxoacyl-[acyl-carrier-protein] synthase 2 (fabF) (Escherichia coli O157:H7).